The following is a 187-amino-acid chain: Small ribosomal subunit protein uS10m (187 aa).

The protein belongs to the universal ribosomal protein uS10 family. As to quaternary structure, component of the mitochondrial ribosome small subunit (28S) which comprises a 12S rRNA and about 30 distinct proteins.

Its subcellular location is the mitochondrion. This Danio rerio (Zebrafish) protein is Small ribosomal subunit protein uS10m (mrps10).